A 363-amino-acid chain; its full sequence is 3-dehydroquinate synthase (363 aa).

NAD(+) is bound by residues Asp74–Lys79, Gly108–Asp112, Thr132–Thr133, Lys145, Lys154, and Cys172–Thr175. Positions 187, 250, and 267 each coordinate Zn(2+).

It belongs to the sugar phosphate cyclases superfamily. Dehydroquinate synthase family. NAD(+) is required as a cofactor. Co(2+) serves as cofactor. Requires Zn(2+) as cofactor.

It is found in the cytoplasm. The enzyme catalyses 7-phospho-2-dehydro-3-deoxy-D-arabino-heptonate = 3-dehydroquinate + phosphate. It functions in the pathway metabolic intermediate biosynthesis; chorismate biosynthesis; chorismate from D-erythrose 4-phosphate and phosphoenolpyruvate: step 2/7. Functionally, catalyzes the conversion of 3-deoxy-D-arabino-heptulosonate 7-phosphate (DAHP) to dehydroquinate (DHQ). This chain is 3-dehydroquinate synthase, found in Buchnera aphidicola subsp. Acyrthosiphon pisum (strain APS) (Acyrthosiphon pisum symbiotic bacterium).